The following is a 489-amino-acid chain: 3-octaprenyl-4-hydroxybenzoate carboxy-lyase (489 aa).

Asparagine 172 lines the Mn(2+) pocket. Prenylated FMN contacts are provided by residues 175 to 177 (IYR), 189 to 191 (RWL), and 194 to 195 (RG). Residue glutamate 238 participates in Mn(2+) binding. Aspartate 287 serves as the catalytic Proton donor.

This sequence belongs to the UbiD family. Homohexamer. Requires prenylated FMN as cofactor. Mn(2+) is required as a cofactor.

The protein resides in the cell membrane. It carries out the reaction a 4-hydroxy-3-(all-trans-polyprenyl)benzoate + H(+) = a 2-(all-trans-polyprenyl)phenol + CO2. It functions in the pathway cofactor biosynthesis; ubiquinone biosynthesis. Its function is as follows. Catalyzes the decarboxylation of 3-octaprenyl-4-hydroxy benzoate to 2-octaprenylphenol, an intermediate step in ubiquinone biosynthesis. This Aeromonas hydrophila subsp. hydrophila (strain ATCC 7966 / DSM 30187 / BCRC 13018 / CCUG 14551 / JCM 1027 / KCTC 2358 / NCIMB 9240 / NCTC 8049) protein is 3-octaprenyl-4-hydroxybenzoate carboxy-lyase.